The sequence spans 160 residues: Large ribosomal subunit protein bL9 (160 aa).

This sequence belongs to the bacterial ribosomal protein bL9 family.

Its function is as follows. Binds to the 23S rRNA. The sequence is that of Large ribosomal subunit protein bL9 from Neorickettsia sennetsu (strain ATCC VR-367 / Miyayama) (Ehrlichia sennetsu).